Consider the following 502-residue polypeptide: MQIKTEEISQIIESQIQNYEQRVEMSETGTVLYVGDGIARVYGVRNAMAMELLEFPGGLMGMVLNLEEDNVGVALLGPDTDIKEGDPVKRTGKIFSVPVGDAVMGRVLNPLGQPIDGEGPVDSKEFRPVELKAPGIIARKSVHEPMPTGIKAIDAMTPIGRGQRELVIGDRQTGKTAVCIDAILAQKNTDIHCFYVAIGQKRSTVALVADTLKKHGAMEYTTIISATASEPAPLQFIAAYAGCAMAEYYRDSGKHALIVYDDLSKQATAYRQMSLLLRRPPGREAFPGDVFYLHSRLLERAAKVNDSLGAGSLTALPIIETQAGDVSAYIPTNVISITDGQVYLEPNLFNAGIRPAINVGLSVSRVGGAAQIKAMKQVAGTMRLDLAQYRELAAFAQFGSDLDKATQAKLNRGARLVELLKQPQYQPMPFNEQVASMYAATRGFMDDVPVASIRKFEAEYIEFLRDAKGDILKDLDEKKAIDNDIEGRMKAALEEFKKGFTA.

Residue G169 to T176 coordinates ATP.

The protein belongs to the ATPase alpha/beta chains family. F-type ATPases have 2 components, CF(1) - the catalytic core - and CF(0) - the membrane proton channel. CF(1) has five subunits: alpha(3), beta(3), gamma(1), delta(1), epsilon(1). CF(0) has three main subunits: a(1), b(2) and c(9-12). The alpha and beta chains form an alternating ring which encloses part of the gamma chain. CF(1) is attached to CF(0) by a central stalk formed by the gamma and epsilon chains, while a peripheral stalk is formed by the delta and b chains.

Its subcellular location is the cell inner membrane. The catalysed reaction is ATP + H2O + 4 H(+)(in) = ADP + phosphate + 5 H(+)(out). In terms of biological role, produces ATP from ADP in the presence of a proton gradient across the membrane. The alpha chain is a regulatory subunit. This chain is ATP synthase subunit alpha, found in Oleidesulfovibrio alaskensis (strain ATCC BAA-1058 / DSM 17464 / G20) (Desulfovibrio alaskensis).